The following is a 529-amino-acid chain: MHHNYYLSPLAVALALGMVSPAKAADPILLQNASFSEVKQKFALSTQGVAVAKDSLSFVSEHTDRNKVTHVRMQQKYVGFPVYGGYAIMHSMNTAKSLAATTQSTVEMNGVVYQGLQTELGQPDASFVQNADKALQQFKAKYANQNVGDEKVIPMVYIDKDNQAHWAYKVSIRVNHLDKAPERPTAIIDARTQQPFVQWNDIKTERVSVKGSGFGGNKKMGYYEFGKDFPYLDLTRDANNATCYMENESVKVIDMKHKYSSVKAAMSFACSTTDSDIYSTGYREDNGALSPSNDALYAGYVIKHMYTDWYGVNVLSNSNGSPMQLVMRVHYGDGYENAYWDGEQMTFGCGDRMMYPLVSLGVGAHEISHGFTEQHSGLEYYGQSGGMNESFSDMAAQAAEHYSVGKSSWQIGGEIMKESSGYDALRYMDKPSRDGESIDTADEYYSGLDVHYSSGVYNHLFYILATKPNWDTRKAFDVMVKANMDYWTPYSSFDEGGCGVLSAAKDLGFSLNDVKSSLQAVAINYSKCH.

The signal sequence occupies residues 1-24 (MHHNYYLSPLAVALALGMVSPAKA). Positions 25–204 (ADPILLQNAS…PFVQWNDIKT (180 aa)) are excised as a propeptide. H365 contacts Zn(2+). The active site involves E366. Positions 369 and 389 each coordinate Zn(2+). Catalysis depends on H451, which acts as the Proton donor.

Belongs to the peptidase M4 family. Zn(2+) serves as cofactor.

The sequence is that of Zinc metalloproteinase MspA (mspA) from Legionella longbeachae.